The following is a 214-amino-acid chain: Homeobox protein HEX homolog pha-2 (214 aa).

Disordered stretches follow at residues 1–50 and 180–214; these read MDQK…QKME and RRVR…LSHG. Residues 24–34 show a composition bias toward low complexity; it reads SSESPIPTGSE. The segment covering 35-44 has biased composition (polar residues); sequence CSLNESSDTT. The segment at residues 124–183 is a DNA-binding region (homeobox); sequence RKGGQIRFTNEQTDALEHKFDSHKYLSPQERKKLAKSLSLSERQVKTWFQNRRAKWRRVR. A compositionally biased stretch (polar residues) spans 200–214; it reads SLGQLQSSNPFLSHG.

Its subcellular location is the nucleus. Functionally, transcriptional repressor. Involved in pharyngeal development and required for the formation of the pharyngeal isthmus. Plays a role in modulating cytoskeleton in the muscle cells of the isthmus. Regulates expression of the acetylcholinesterase genes ace-1 and ace-2. May regulate its own expression. The sequence is that of Homeobox protein HEX homolog pha-2 from Caenorhabditis elegans.